The sequence spans 275 residues: Peptidoglycan-N-acetylglucosamine deacetylase BC_1960 (275 aa).

A NodB homology domain is found at 81 to 262 (AEVALTFDDG…QLKTKGARFV (182 aa)). Residue D88 is the Proton acceptor of the active site. Positions 89, 139, and 143 each coordinate Zn(2+). A 2-hydroxyproline; partial modification is found at P179. The active-site Proton donor is H233.

Belongs to the polysaccharide deacetylase family. Zn(2+) serves as cofactor. Hydroxylated on Pro-179. Hydroxylation alters the active site and enhances significantly deacetylase activity, probably by creating a more favorable environment for transition-state stabilization. It might be autocatalytic.

The enzyme catalyses peptidoglycan-N-acetyl-D-glucosamine + H2O = peptidoglycan-D-glucosamine + acetate.. Its activity is regulated as follows. Deacetylase activity is stimulated by hydroxylation on Pro-179. Inhibited by CuCl(2) and ZnCl(2). Inhibited by the hydroxamate N-hydroxy-4-(naphthalene-1-yl)benzamide (NHNB). Catalyzes the deacetylation of N-acetylglucosamine (GlcNAc) residues in peptidoglycan. Also acts on soluble chitin substrates and N-acetylchitooligomers. Acts on cell wall peptidoglycan from the Gram-positive bacteria B.cereus and B.subtilis and the Gram-negative bacterium H.pylori. Not active on acetylated xylan. The chain is Peptidoglycan-N-acetylglucosamine deacetylase BC_1960 from Bacillus cereus (strain ATCC 14579 / DSM 31 / CCUG 7414 / JCM 2152 / NBRC 15305 / NCIMB 9373 / NCTC 2599 / NRRL B-3711).